Here is a 259-residue protein sequence, read N- to C-terminus: 14-3-3-like protein (259 aa).

Positions Met-238–Pro-259 are disordered. The span at Gly-244–Pro-259 shows a compositional bias: basic and acidic residues.

It belongs to the 14-3-3 family.

The polypeptide is 14-3-3-like protein (Chlamydomonas reinhardtii (Chlamydomonas smithii)).